Reading from the N-terminus, the 622-residue chain is Golgin subfamily A member 6-like protein 7 (622 aa).

Disordered stretches follow at residues 1–82 (MMSE…QQAL), 251–496 (RKHE…RKQV), and 511–580 (EKMQ…HDNR). Basic and acidic residues-rich tracts occupy residues 57 to 74 (SPED…ENKA), 251 to 275 (RKHE…REQE), 283 to 332 (EQMR…KQEE), 339 to 367 (EQMR…KQEE), 374 to 388 (EQMR…KQEE), and 395 to 420 (EQMR…KQEE). The stretch at 100 to 534 (KTELETALHD…EKRREKKERM (435 aa)) forms a coiled coil. Residues 477-489 (QMGEQEEQMGEQE) show a composition bias toward acidic residues. 2 stretches are compositionally biased toward basic and acidic residues: residues 511-546 (EKMQ…ERCS) and 567-580 (PARE…HDNR).

This sequence belongs to the GOLGA6 family.

This chain is Golgin subfamily A member 6-like protein 7, found in Homo sapiens (Human).